A 327-amino-acid polypeptide reads, in one-letter code: Probable protein phosphatase 2C 59 (327 aa).

Positions 1–24 (MREVLLLGSLVVLALLSLFPCCSC) are cleaved as a signal peptide. The PPM-type phosphatase domain occupies 64–310 (SYGYASSPGK…DNITCLVVRF (247 aa)). 4 residues coordinate Mn(2+): Asp100, Gly101, Asp262, and Asp301.

Belongs to the PP2C family. It depends on Mg(2+) as a cofactor. Mn(2+) serves as cofactor.

It carries out the reaction O-phospho-L-seryl-[protein] + H2O = L-seryl-[protein] + phosphate. It catalyses the reaction O-phospho-L-threonyl-[protein] + H2O = L-threonyl-[protein] + phosphate. The chain is Probable protein phosphatase 2C 59 from Oryza sativa subsp. japonica (Rice).